We begin with the raw amino-acid sequence, 740 residues long: F-BAR and double SH3 domains protein 2 (740 aa).

The F-BAR domain maps to 8–282 (VKVTQELRNI…NSSKVVRDYN (275 aa)). A disordered region spans residues 303–323 (PCDSDTSRQLESETGTTEEHS). Residues 307 to 323 (DTSRQLESETGTTEEHS) show a composition bias toward basic and acidic residues. The stretch at 356 to 397 (GVALSEQSRAELEQKIDEARESIRKAEIIKLKAEARLDLLKQ) forms a coiled coil. SH3 domains are found at residues 469–530 (NYPL…FPTS) and 567–629 (ASVC…ELSA). The segment at 567–629 (ASVCFVKALY…PSVLVEELSA (63 aa)) is required and sufficient for location at clathrin-coated pits. The segment covering 629-645 (ASENGDTPWTREIQISP) has biased composition (polar residues). The disordered stretch occupies residues 629–740 (ASENGDTPWT…KMEDVEITLV (112 aa)). Positions 646-657 (SPKPHTSLPPLP) are enriched in pro residues. A phosphoserine mark is found at serine 675 and serine 681. Polar residues predominate over residues 675–706 (SQFFPRSPSANENSLHAESPGFSQASRQTPDT).

As to quaternary structure, homodimer. Interacts (via SH3 domain 2) with ITSN1 (via SH3 domain 4). Recruited to clathrin-coated pits during a mid-to-late stage of assembly via interaction with ITSN1. Interacts (via SH3 domain 1) with WASL. Interacts with WAS. Interacts with CASK and MAGI1. CASK inhibits interaction with MAGI1. Phosphorylated. Phosphorylation on a Ser residue is important for recruitment to the cell membrane and for its role in promoting endocytosis. In terms of tissue distribution, detected in inner ear vestibula and in stereocilia in cochlear hair cell bundles (at protein level). Ubiquitous. Detected in testis, liver, brain cortex, cerebellum, kidney, organ of Corti, utricle, spiral ganglion, tongue and eye.

It is found in the cytoplasm. The protein resides in the cell junction. Its subcellular location is the membrane. The protein localises to the clathrin-coated pit. It localises to the cell membrane. It is found in the cell projection. The protein resides in the stereocilium. In terms of biological role, adapter protein that plays a role in endocytosis via clathrin-coated pits. Contributes to the internalization of cell surface receptors, such as integrin ITGB1 and transferrin receptor. Promotes endocytosis of EGFR in cancer cells, and thereby contributes to the down-regulation of EGFR signaling. Recruited to clathrin-coated pits during a mid-to-late stage of assembly, where it is required for normal progress from U-shaped intermediate stage pits to terminal, omega-shaped pits. Binds to membranes enriched in phosphatidylinositol 3,4-bisphosphate or phosphatidylinositol 3,4,5-trisphosphate. When bound to membranes, promotes actin polymerization via its interaction with WAS and/or WASL which leads to the activation of the Arp2/3 complex. Does not promote actin polymerisation in the absence of membranes. This chain is F-BAR and double SH3 domains protein 2 (Fchsd2), found in Mus musculus (Mouse).